The primary structure comprises 161 residues: Lipoprotein signal peptidase (161 aa).

Transmembrane regions (helical) follow at residues 11-31, 44-64, 66-86, and 100-120; these read PLFW…KLWV, LWSG…FSAF, GGAG…IIFA, and GCIL…GHVI. Active-site residues include Asp-121 and Asp-137. The helical transmembrane segment at 135–155 threads the bilayer; the sequence is LADVSINIGIAALLWASFFPV.

The protein belongs to the peptidase A8 family.

Its subcellular location is the cell inner membrane. The enzyme catalyses Release of signal peptides from bacterial membrane prolipoproteins. Hydrolyzes -Xaa-Yaa-Zaa-|-(S,diacylglyceryl)Cys-, in which Xaa is hydrophobic (preferably Leu), and Yaa (Ala or Ser) and Zaa (Gly or Ala) have small, neutral side chains.. It functions in the pathway protein modification; lipoprotein biosynthesis (signal peptide cleavage). Its function is as follows. This protein specifically catalyzes the removal of signal peptides from prolipoproteins. In Synechocystis sp. (strain ATCC 27184 / PCC 6803 / Kazusa), this protein is Lipoprotein signal peptidase.